A 364-amino-acid chain; its full sequence is GDP-perosamine synthase (364 aa).

The residue at position 183 (Lys183) is an N6-(pyridoxal phosphate)lysine.

This sequence belongs to the DegT/DnrJ/EryC1 family. In terms of assembly, homodecamer. It depends on pyridoxal 5'-phosphate as a cofactor.

The enzyme catalyses GDP-alpha-D-perosamine + 2-oxoglutarate = GDP-4-dehydro-alpha-D-rhamnose + L-glutamate. It functions in the pathway bacterial outer membrane biogenesis; LPS O-antigen biosynthesis. Divalent ions have no significant effect on activity. Catalyzes the synthesis of GDP-perosamine from GDP-4-keto-6-deoxy-D-mannose and L-glutamate. Can use only L-glutamate as amino donor. In Escherichia coli O157:H7, this protein is GDP-perosamine synthase.